A 605-amino-acid polypeptide reads, in one-letter code: Formin-binding protein 1-like (605 aa).

The region spanning 1–263 (MSWGTELWDQ…AAKSVDERRD (263 aa)) is the F-BAR domain. Positions 66–258 (FTSCIAFFNI…EGMILAAKSV (193 aa)) form a coiled coil. Residues 245 to 535 (SKCLEGMILA…EFDDEFEDDD (291 aa)) form an interaction with CDC42 region. The residue at position 295 (S295) is a Phosphoserine. A coiled-coil region spans residues 392–484 (LEDFSHLPPE…VEGKTGIRGD (93 aa)). The REM-1 domain maps to 397–474 (HLPPEQRRKK…IHKNEAWLSE (78 aa)). The tract at residues 482–538 (RGDRRHSSDINHLVTQGRESPEGSYTDDANQEVRGPPQQHGHHSEFDDEFEDDDPLP) is disordered. Phosphoserine is present on residues S488, S501, and S505. An interaction with DNM1 region spans residues 522-605 (GHHSEFDDEF…VTLEKSSKGS (84 aa)). A compositionally biased stretch (acidic residues) spans 527 to 536 (FDDEFEDDDP). An SH3 domain is found at 538-599 (PAIGHCKAIY…PTTYIDVTLE (62 aa)). Residues 541–597 (GHCKAIYPFDGHNEGTLAMKEGEVLYIIEEDKGDGWTRARRQNGEEGYVPTTYIDVT) form an interaction with DNM2 and WASL region. The tract at residues 541 to 605 (GHCKAIYPFD…VTLEKSSKGS (65 aa)) is interaction with DAAM1, DIAPH1 and DIAPH2.

Belongs to the FNBP1 family. In terms of assembly, homodimerizes, the dimers can polymerize end-to-end to form filamentous structures. Interacts with GTP-bound CDC42. Interacts with DAAM1, DIAPH1, DIAPH2, DNM1, DNM2 and WASL/N-WASP. Interacts with ATG3. Interacts (via SH3 domain) with ABI1, WASF2, CDC42 and WIPF1.

The protein resides in the cytoplasm. Its subcellular location is the cytoskeleton. The protein localises to the cell cortex. It localises to the cytoplasmic vesicle. It is found in the cell membrane. Functionally, required to coordinate membrane tubulation with reorganization of the actin cytoskeleton during endocytosis. May bind to lipids such as phosphatidylinositol 4,5-bisphosphate and phosphatidylserine and promote membrane invagination and the formation of tubules. Also promotes CDC42-induced actin polymerization by activating the WASL-WASPIP complex, the predominant form of WASL/N-WASP in cells. Actin polymerization may promote the fission of membrane tubules to form endocytic vesicles. Essential for autophagy of intracellular bacterial pathogens. The protein is Formin-binding protein 1-like (Fnbp1l) of Mus musculus (Mouse).